The following is a 315-amino-acid chain: Gamma-hemolysin component C (315 aa).

Positions 1 to 29 are cleaved as a signal peptide; that stretch reads MLKNKILTTTLSVSLLAPLANPLLENAKA.

It belongs to the aerolysin family. In terms of assembly, toxicity requires sequential binding and synergistic association of a class S and a class F component which form heterooligomeric complexes. HlgC (class S) associates with HlgB (class F) thus forming an CB toxin.

In terms of biological role, toxin that seems to act by forming pores in the membrane of the cell. Has a hemolytic and a leucotoxic activity. This Staphylococcus aureus (strain COL) protein is Gamma-hemolysin component C (hlgC).